Here is a 178-residue protein sequence, read N- to C-terminus: Large ribosomal subunit protein uL6 (178 aa).

This sequence belongs to the universal ribosomal protein uL6 family. Part of the 50S ribosomal subunit.

Its function is as follows. This protein binds to the 23S rRNA, and is important in its secondary structure. It is located near the subunit interface in the base of the L7/L12 stalk, and near the tRNA binding site of the peptidyltransferase center. This Corynebacterium diphtheriae (strain ATCC 700971 / NCTC 13129 / Biotype gravis) protein is Large ribosomal subunit protein uL6.